The sequence spans 283 residues: 4-diphosphocytidyl-2-C-methyl-D-erythritol kinase (283 aa).

Lysine 10 is an active-site residue. Residue 99 to 109 (PMGGGLGGGSS) participates in ATP binding. Aspartate 141 is a catalytic residue.

The protein belongs to the GHMP kinase family. IspE subfamily. As to quaternary structure, homodimer.

It carries out the reaction 4-CDP-2-C-methyl-D-erythritol + ATP = 4-CDP-2-C-methyl-D-erythritol 2-phosphate + ADP + H(+). Its pathway is isoprenoid biosynthesis; isopentenyl diphosphate biosynthesis via DXP pathway; isopentenyl diphosphate from 1-deoxy-D-xylulose 5-phosphate: step 3/6. Functionally, catalyzes the phosphorylation of the position 2 hydroxy group of 4-diphosphocytidyl-2C-methyl-D-erythritol. The chain is 4-diphosphocytidyl-2-C-methyl-D-erythritol kinase from Salmonella arizonae (strain ATCC BAA-731 / CDC346-86 / RSK2980).